A 677-amino-acid polypeptide reads, in one-letter code: DNA gyrase subunit B, novobiocin-resistant (677 aa).

Positions 1-23 are disordered; that stretch reads MTTYDTRTATDTRGSEQPGHVGT. The segment at 154 to 295 is novobiocin-binding; sequence IWTDGHRWTQ…RLLSAEIALQ (142 aa). The Toprim domain maps to 456–570; sequence SEIFIVEGDS…EGHVHLSRPP (115 aa). Residues Glu-462, Asp-535, and Asp-537 each coordinate Mg(2+).

Belongs to the type II topoisomerase GyrB family. As to quaternary structure, heterotetramer, composed of two GyrA and two GyrB chains. In the heterotetramer, GyrA contains the active site tyrosine that forms a transient covalent intermediate with DNA, while GyrB binds cofactors and catalyzes ATP hydrolysis. It depends on Mg(2+) as a cofactor. Requires Mn(2+) as cofactor. Ca(2+) is required as a cofactor.

It localises to the cytoplasm. It carries out the reaction ATP-dependent breakage, passage and rejoining of double-stranded DNA.. A type II topoisomerase that negatively supercoils closed circular double-stranded (ds) DNA in an ATP-dependent manner to modulate DNA topology and maintain chromosomes in an underwound state. Negative supercoiling favors strand separation, and DNA replication, transcription, recombination and repair, all of which involve strand separation. Also able to catalyze the interconversion of other topological isomers of dsDNA rings, including catenanes and knotted rings. Type II topoisomerases break and join 2 DNA strands simultaneously in an ATP-dependent manner. This is DNA gyrase subunit B, novobiocin-resistant from Streptomyces niveus (Streptomyces spheroides).